Consider the following 89-residue polypeptide: Small ribosomal subunit protein uS15 (89 aa).

It belongs to the universal ribosomal protein uS15 family. As to quaternary structure, part of the 30S ribosomal subunit. Forms a bridge to the 50S subunit in the 70S ribosome, contacting the 23S rRNA.

In terms of biological role, one of the primary rRNA binding proteins, it binds directly to 16S rRNA where it helps nucleate assembly of the platform of the 30S subunit by binding and bridging several RNA helices of the 16S rRNA. Forms an intersubunit bridge (bridge B4) with the 23S rRNA of the 50S subunit in the ribosome. The polypeptide is Small ribosomal subunit protein uS15 (Shouchella clausii (strain KSM-K16) (Alkalihalobacillus clausii)).